Here is a 207-residue protein sequence, read N- to C-terminus: GTP cyclohydrolase-2 (207 aa).

A GTP-binding site is contributed by 49–53 (RTHSE). Zn(2+)-binding residues include Cys54, Cys65, and Cys67. GTP contacts are provided by residues Gln70, 92–94 (EGR), and Thr114. The active-site Proton acceptor is the Asp126. Arg128 acts as the Nucleophile in catalysis. GTP-binding residues include Thr149 and Lys154.

This sequence belongs to the GTP cyclohydrolase II family. The cofactor is Zn(2+).

The catalysed reaction is GTP + 4 H2O = 2,5-diamino-6-hydroxy-4-(5-phosphoribosylamino)-pyrimidine + formate + 2 phosphate + 3 H(+). It functions in the pathway cofactor biosynthesis; riboflavin biosynthesis; 5-amino-6-(D-ribitylamino)uracil from GTP: step 1/4. Functionally, catalyzes the conversion of GTP to 2,5-diamino-6-ribosylamino-4(3H)-pyrimidinone 5'-phosphate (DARP), formate and pyrophosphate. This is GTP cyclohydrolase-2 from Hahella chejuensis (strain KCTC 2396).